Here is a 211-residue protein sequence, read N- to C-terminus: Thiamine-phosphate synthase (211 aa).

Residues 37–41 and N69 contribute to the 4-amino-2-methyl-5-(diphosphooxymethyl)pyrimidine site; that span reads QYRDK. Positions 70 and 89 each coordinate Mg(2+). Position 108 (S108) interacts with 4-amino-2-methyl-5-(diphosphooxymethyl)pyrimidine. A 2-[(2R,5Z)-2-carboxy-4-methylthiazol-5(2H)-ylidene]ethyl phosphate-binding site is contributed by 135–137; it reads SPT. K138 contacts 4-amino-2-methyl-5-(diphosphooxymethyl)pyrimidine. 2-[(2R,5Z)-2-carboxy-4-methylthiazol-5(2H)-ylidene]ethyl phosphate is bound by residues G165 and 185 to 186; that span reads LS.

It belongs to the thiamine-phosphate synthase family. Requires Mg(2+) as cofactor.

It carries out the reaction 2-[(2R,5Z)-2-carboxy-4-methylthiazol-5(2H)-ylidene]ethyl phosphate + 4-amino-2-methyl-5-(diphosphooxymethyl)pyrimidine + 2 H(+) = thiamine phosphate + CO2 + diphosphate. The enzyme catalyses 2-(2-carboxy-4-methylthiazol-5-yl)ethyl phosphate + 4-amino-2-methyl-5-(diphosphooxymethyl)pyrimidine + 2 H(+) = thiamine phosphate + CO2 + diphosphate. It catalyses the reaction 4-methyl-5-(2-phosphooxyethyl)-thiazole + 4-amino-2-methyl-5-(diphosphooxymethyl)pyrimidine + H(+) = thiamine phosphate + diphosphate. Its pathway is cofactor biosynthesis; thiamine diphosphate biosynthesis; thiamine phosphate from 4-amino-2-methyl-5-diphosphomethylpyrimidine and 4-methyl-5-(2-phosphoethyl)-thiazole: step 1/1. In terms of biological role, condenses 4-methyl-5-(beta-hydroxyethyl)thiazole monophosphate (THZ-P) and 2-methyl-4-amino-5-hydroxymethyl pyrimidine pyrophosphate (HMP-PP) to form thiamine monophosphate (TMP). In Thiobacillus denitrificans (strain ATCC 25259 / T1), this protein is Thiamine-phosphate synthase.